The following is a 196-amino-acid chain: uncharacterized protein (196 aa).

This sequence to E.coli YjaG.

This is an uncharacterized protein from Haemophilus influenzae (strain ATCC 51907 / DSM 11121 / KW20 / Rd).